Here is a 100-residue protein sequence, read N- to C-terminus: Aspartyl/glutamyl-tRNA(Asn/Gln) amidotransferase subunit C (100 aa).

The protein belongs to the GatC family. As to quaternary structure, heterotrimer of A, B and C subunits.

The catalysed reaction is L-glutamyl-tRNA(Gln) + L-glutamine + ATP + H2O = L-glutaminyl-tRNA(Gln) + L-glutamate + ADP + phosphate + H(+). It carries out the reaction L-aspartyl-tRNA(Asn) + L-glutamine + ATP + H2O = L-asparaginyl-tRNA(Asn) + L-glutamate + ADP + phosphate + 2 H(+). Its function is as follows. Allows the formation of correctly charged Asn-tRNA(Asn) or Gln-tRNA(Gln) through the transamidation of misacylated Asp-tRNA(Asn) or Glu-tRNA(Gln) in organisms which lack either or both of asparaginyl-tRNA or glutaminyl-tRNA synthetases. The reaction takes place in the presence of glutamine and ATP through an activated phospho-Asp-tRNA(Asn) or phospho-Glu-tRNA(Gln). This Streptococcus pneumoniae (strain Taiwan19F-14) protein is Aspartyl/glutamyl-tRNA(Asn/Gln) amidotransferase subunit C.